The chain runs to 77 residues: Acyl carrier protein (77 aa).

The Carrier domain occupies 2 to 77 (ADALERVTKI…DAVNYINSKQ (76 aa)). Serine 37 bears the O-(pantetheine 4'-phosphoryl)serine mark.

Belongs to the acyl carrier protein (ACP) family. Post-translationally, 4'-phosphopantetheine is transferred from CoA to a specific serine of apo-ACP by AcpS. This modification is essential for activity because fatty acids are bound in thioester linkage to the sulfhydryl of the prosthetic group.

It is found in the cytoplasm. It participates in lipid metabolism; fatty acid biosynthesis. Its function is as follows. Carrier of the growing fatty acid chain in fatty acid biosynthesis. The protein is Acyl carrier protein of Bacillus licheniformis (strain ATCC 14580 / DSM 13 / JCM 2505 / CCUG 7422 / NBRC 12200 / NCIMB 9375 / NCTC 10341 / NRRL NRS-1264 / Gibson 46).